Reading from the N-terminus, the 418-residue chain is MLMFQKPKGTRDFLPEEMKKRKNIEKKLRKVFDSYNFSEINTPTFESFELLSKKTGEEIRKQLFVFKDHGDREMGLRPELTSSVARFYINEFKNTPKPVKLYYFTNCFRYENPQAGRYREFWQMGSELIGSKKPIADAEVINLAIEGLKEINMDFEINIGHLGVLKGVFEKYDLSDDEGNEIRRLIDKEDMDGLKTALSRIESEKNIEISEKVFEVLELKGGREVISKLKEKLSEFESSVTALENLDSILEFVPHEYIINFGIARGLDYYTGMVFEIYGKREGARQVCGGGRYDNLIELFEGEPSPAVGFAYGFDRIMLNIDDFEVEEESIFVVPVKSSDMLLNECLKIAKTLRDAGKAVELDLMGRKLNKALNYANTKGIKKVLIVGENDILEGKVALKNMETGEQSLIELKDILTI.

It belongs to the class-II aminoacyl-tRNA synthetase family.

It is found in the cytoplasm. The enzyme catalyses tRNA(His) + L-histidine + ATP = L-histidyl-tRNA(His) + AMP + diphosphate + H(+). The chain is Histidine--tRNA ligase from Methanococcus maripaludis (strain C6 / ATCC BAA-1332).